The chain runs to 305 residues: Porphobilinogen deaminase (305 aa).

An S-(dipyrrolylmethanemethyl)cysteine modification is found at C243.

This sequence belongs to the HMBS family. As to quaternary structure, monomer. Dipyrromethane is required as a cofactor.

It carries out the reaction 4 porphobilinogen + H2O = hydroxymethylbilane + 4 NH4(+). The protein operates within porphyrin-containing compound metabolism; protoporphyrin-IX biosynthesis; coproporphyrinogen-III from 5-aminolevulinate: step 2/4. In terms of biological role, tetrapolymerization of the monopyrrole PBG into the hydroxymethylbilane pre-uroporphyrinogen in several discrete steps. The sequence is that of Porphobilinogen deaminase from Limosilactobacillus reuteri (strain DSM 20016) (Lactobacillus reuteri).